A 330-amino-acid polypeptide reads, in one-letter code: D-lactate dehydrogenase (330 aa).

NAD(+) is bound by residues 155–156, Asp-175, 206–207, Asn-212, 233–235, and Asp-259; these read RI, MP, and MAR. The active site involves Arg-235. The active site involves Glu-264. His-296 acts as the Proton donor in catalysis.

It belongs to the D-isomer specific 2-hydroxyacid dehydrogenase family.

It carries out the reaction (R)-lactate + NAD(+) = pyruvate + NADH + H(+). The sequence is that of D-lactate dehydrogenase (ldhD) from Streptococcus agalactiae serotype III (strain NEM316).